Here is a 667-residue protein sequence, read N- to C-terminus: E3 ubiquitin-protein ligase Midline-1 (667 aa).

The RING-type zinc finger occupies 10 to 60 (CPICLELLEDPLLLPCAHSLCFNCAHRILVSHCATNEPVESINAFQCPTCR). Ser-92 and Ser-96 each carry phosphoserine. 2 B box-type zinc fingers span residues 116-165 (KVLC…IEPI) and 172-212 (GLMC…VAAL). Zn(2+) is bound by residues Cys-119, Cys-122, Cys-134, Cys-137, Cys-142, Cys-145, His-150, His-159, Cys-175, His-178, Cys-198, and His-204. A coiled-coil region spans residues 205–264 (RDHQVAALSERYDKLKQNLESNLTNLIKRNTELETLLAKLIQTCQHVEVNASRQEAKLTE). The COS domain occupies 320-379 (LKENDHARFLQTAKNITERVSMATASSQVLIPEINLNDTFDTFALDFSREKKLLECLDYL). One can recognise a Fibronectin type-III domain in the interval 381-484 (APNPPTIREE…EPGKLKTNSQ (104 aa)). The span at 471 to 485 (SRSSEPGKLKTNSQP) shows a compositional bias: polar residues. The segment at 471 to 524 (SRSSEPGKLKTNSQPFKLDPKSAHRKLKVSHDNLTVERDESSSKKSHTPERFTS) is disordered. The 178-residue stretch at 482–659 (NSQPFKLDPK…IITGLPIPDH (178 aa)) folds into the B30.2/SPRY domain. Over residues 499-520 (VSHDNLTVERDESSSKKSHTPE) the composition is skewed to basic and acidic residues. At Ser-511 the chain carries Phosphoserine.

This sequence belongs to the TRIM/RBCC family. In terms of assembly, homodimer or heterodimer with MID2. Interacts with IGBP1.

The protein resides in the cytoplasm. It localises to the cytoskeleton. The catalysed reaction is S-ubiquitinyl-[E2 ubiquitin-conjugating enzyme]-L-cysteine + [acceptor protein]-L-lysine = [E2 ubiquitin-conjugating enzyme]-L-cysteine + N(6)-ubiquitinyl-[acceptor protein]-L-lysine.. Has E3 ubiquitin ligase activity towards IGBP1, promoting its monoubiquitination, which results in deprotection of the catalytic subunit of protein phosphatase PP2A, and its subsequent degradation by polyubiquitination. The protein is E3 ubiquitin-protein ligase Midline-1 (Mid1) of Mus spretus (Western Mediterranean mouse).